The sequence spans 208 residues: Imidazoleglycerol-phosphate dehydratase (208 aa).

The protein belongs to the imidazoleglycerol-phosphate dehydratase family.

It carries out the reaction D-erythro-1-(imidazol-4-yl)glycerol 3-phosphate = 3-(imidazol-4-yl)-2-oxopropyl phosphate + H2O. It functions in the pathway amino-acid biosynthesis; L-histidine biosynthesis; L-histidine from 5-phospho-alpha-D-ribose 1-diphosphate: step 6/9. The protein is Imidazoleglycerol-phosphate dehydratase (his3) of Trichoderma harzianum (Hypocrea lixii).